The primary structure comprises 594 residues: Aspartate--tRNA(Asp/Asn) ligase (594 aa).

Glu175 lines the L-aspartate pocket. The aspartate stretch occupies residues 199–202 (QLFK). Arg221 is an L-aspartate binding site. Residues 221 to 223 (RDE) and Gln230 each bind ATP. L-aspartate is bound at residue His446. Residue Glu492 participates in ATP binding. Position 499 (Arg499) interacts with L-aspartate. 544 to 547 (GFDR) contacts ATP.

Belongs to the class-II aminoacyl-tRNA synthetase family. Type 1 subfamily. As to quaternary structure, homodimer.

Its subcellular location is the cytoplasm. It catalyses the reaction tRNA(Asx) + L-aspartate + ATP = L-aspartyl-tRNA(Asx) + AMP + diphosphate. In terms of biological role, aspartyl-tRNA synthetase with relaxed tRNA specificity since it is able to aspartylate not only its cognate tRNA(Asp) but also tRNA(Asn). Reaction proceeds in two steps: L-aspartate is first activated by ATP to form Asp-AMP and then transferred to the acceptor end of tRNA(Asp/Asn). In Hydrogenobaculum sp. (strain Y04AAS1), this protein is Aspartate--tRNA(Asp/Asn) ligase.